We begin with the raw amino-acid sequence, 202 residues long: Matrix protein (202 aa).

The disordered stretch occupies residues 13–32; sequence DEEIPKPGTPSAPPDDDDLW. Residues 35–38 carry the PPXY motif motif; it reads PPEY.

The protein belongs to the lyssavirus matrix protein family. As to quaternary structure, homomultimer. Interacts with nucleoprotein and with the cytoplasmic domain of glycoprotein.

The protein resides in the virion membrane. It localises to the host endomembrane system. Plays a major role in assembly and budding of virion. Completely covers the ribonucleoprotein coil and keep it in condensed bullet-shaped form. Inhibits viral transcription and stimulates replication. Plays a major role in early induction of TRAIL-mediated apoptosis in infected neurons. The sequence is that of Matrix protein (M) from Lagos bat virus (LBV).